The primary structure comprises 513 residues: Serine/threonine-protein phosphatase T (513 aa).

TPR repeat units follow at residues 12–45 (ALER…DSTQ), 46–79 (SIYF…DPKN), and 80–113 (IKAY…KPND). The segment at 188–513 (KNMSQEFISK…MAYSNGGFGL (326 aa)) is catalytic. D249, H251, D278, and N310 together coordinate Mn(2+). Catalysis depends on H311, which acts as the Proton donor/acceptor. Positions 359 and 434 each coordinate Mn(2+).

The protein belongs to the PPP phosphatase family. PP-5 (PP-T) subfamily. Interacts (via TPR repeats) with HSP82 (via C-terminal MEEVD pentapeptide). Mg(2+) serves as cofactor. Requires Mn(2+) as cofactor.

The protein resides in the nucleus. It catalyses the reaction O-phospho-L-seryl-[protein] + H2O = L-seryl-[protein] + phosphate. The enzyme catalyses O-phospho-L-threonyl-[protein] + H2O = L-threonyl-[protein] + phosphate. Its activity is regulated as follows. Stimulated by arachidonic acid and other unsaturated fatty acids, and by arachidoyl coenzyme A. Protein phosphatase that specifically binds to and dephosphorylates the molecular chaperone Hsp90 (HSC82 and HSP82). Dephosphorylation positively regulates the Hsp90 chaperone machinery. In Saccharomyces cerevisiae (strain ATCC 204508 / S288c) (Baker's yeast), this protein is Serine/threonine-protein phosphatase T (PPT1).